A 24-amino-acid chain; its full sequence is Ascaphin-7 (24 aa).

Expressed by the skin glands.

The protein localises to the secreted. Antimicrobial peptide that shows higher potency against Gram-negative bacteria than against Gram-positive bacteria. Has a very week hemolytic activity. The protein is Ascaphin-7 of Ascaphus truei (Coastal tailed frog).